Consider the following 439-residue polypeptide: Perilipin-3 (439 aa).

The segment covering 1-19 (MFASETEASASSTQVTTEE) has biased composition (low complexity). The disordered stretch occupies residues 1 to 26 (MFASETEASASSTQVTTEEPVQQPSV). Position 66 is an N6-acetyllysine (lysine 66). Serine 92 bears the Phosphoserine mark. Residue lysine 123 forms a Glycyl lysine isopeptide (Lys-Gly) (interchain with G-Cter in SUMO1) linkage. Serine 131 carries the phosphoserine modification. At threonine 175 the chain carries Phosphothreonine. Phosphoserine occurs at positions 180 and 184. Residue threonine 221 is modified to Phosphothreonine. 2 positions are modified to phosphoserine: serine 222 and serine 246. Coiled coils occupy residues 254–282 (RAYE…QALS) and 358–381 (AHVK…FSGM). Tyrosine 256 carries the phosphotyrosine modification.

The protein belongs to the perilipin family. In terms of assembly, homooligomer. Interacts with M6PR (via the cytoplasmic domain). Interacts with IGF2R (via the cytoplasmic domain). In terms of processing, phosphorylation at Tyr-256 by isoform 1 of CHKA (CHKalpha2) promotes dissociation from lipid droplets: dissociation is followed by recruitment of autophagosome machinery to lipid droplets and subsequent lipid droplet lipolysis.

Its subcellular location is the lipid droplet. It is found in the endosome membrane. It localises to the cytoplasm. In terms of biological role, structural component of lipid droplets, which is required for the formation and maintenance of lipid storage droplets. Required for the transport of mannose 6-phosphate receptors (MPR) from endosomes to the trans-Golgi network. This chain is Perilipin-3 (PLIN3), found in Sus scrofa (Pig).